The chain runs to 206 residues: Uridine kinase (206 aa).

11–18 (GGTGSGKS) lines the ATP pocket.

It belongs to the uridine kinase family.

It localises to the cytoplasm. The catalysed reaction is uridine + ATP = UMP + ADP + H(+). It catalyses the reaction cytidine + ATP = CMP + ADP + H(+). Its pathway is pyrimidine metabolism; CTP biosynthesis via salvage pathway; CTP from cytidine: step 1/3. It functions in the pathway pyrimidine metabolism; UMP biosynthesis via salvage pathway; UMP from uridine: step 1/1. The protein is Uridine kinase of Clostridium botulinum (strain Okra / Type B1).